We begin with the raw amino-acid sequence, 592 residues long: Aspartate--tRNA ligase (592 aa).

Glu-171 lines the L-aspartate pocket. The tract at residues 195–198 (QLFK) is aspartate. Arg-217 lines the L-aspartate pocket. Residues 217–219 (RDE) and Gln-226 contribute to the ATP site. His-448 lines the L-aspartate pocket. Residue Glu-482 participates in ATP binding. Arg-489 serves as a coordination point for L-aspartate. Residue 534–537 (GLDR) participates in ATP binding.

This sequence belongs to the class-II aminoacyl-tRNA synthetase family. Type 1 subfamily. In terms of assembly, homodimer.

The protein localises to the cytoplasm. The enzyme catalyses tRNA(Asp) + L-aspartate + ATP = L-aspartyl-tRNA(Asp) + AMP + diphosphate. Functionally, catalyzes the attachment of L-aspartate to tRNA(Asp) in a two-step reaction: L-aspartate is first activated by ATP to form Asp-AMP and then transferred to the acceptor end of tRNA(Asp). This chain is Aspartate--tRNA ligase, found in Pseudoalteromonas translucida (strain TAC 125).